Consider the following 161-residue polypeptide: Phosphopantetheine adenylyltransferase (161 aa).

A substrate-binding site is contributed by Thr11. Residues 11–12 (TF) and His19 contribute to the ATP site. Residues Lys43, Thr75, and Arg89 each contribute to the substrate site. Residues 90-92 (GLR), Glu100, and 125-131 (YSFLSSS) contribute to the ATP site.

Belongs to the bacterial CoaD family. Homohexamer. Mg(2+) serves as cofactor.

It localises to the cytoplasm. The catalysed reaction is (R)-4'-phosphopantetheine + ATP + H(+) = 3'-dephospho-CoA + diphosphate. Its pathway is cofactor biosynthesis; coenzyme A biosynthesis; CoA from (R)-pantothenate: step 4/5. Reversibly transfers an adenylyl group from ATP to 4'-phosphopantetheine, yielding dephospho-CoA (dPCoA) and pyrophosphate. The protein is Phosphopantetheine adenylyltransferase of Listeria welshimeri serovar 6b (strain ATCC 35897 / DSM 20650 / CCUG 15529 / CIP 8149 / NCTC 11857 / SLCC 5334 / V8).